Consider the following 1264-residue polypeptide: BRCA2-interacting transcriptional repressor EMSY (1264 aa).

The tract at residues 1-442 (MPVVWPTLLD…LPKPVTATLP (442 aa)) is interaction with BRCA2. The ENT domain occupies 16–114 (CKRILRKLEL…EWSIEGRRLV (99 aa)). The tract at residues 118–122 (PRLVP) is interaction with ZMYND11. Residues 145–179 (PVPAETASKDGVSCSDEDEKPRKRRRTNSSSSSPV) are disordered. Residue Thr-171 is modified to Phosphothreonine. Phosphoserine is present on residues Ser-173 and Ser-177. 2 O-linked (GlcNAc) serine glycosylation sites follow: Ser-192 and Ser-200. Ser-202 is subject to Phosphoserine. O-linked (GlcNAc) threonine glycosylation occurs at Thr-235. Low complexity predominate over residues 364–406 (FPKQHQQSPKQQLQQVQQQTQQPVAQPSSVSQQQQPQQSALPP). A disordered region spans residues 364–407 (FPKQHQQSPKQQLQQVQQQTQQPVAQPSSVSQQQQPQQSALPPG). O-linked (GlcNAc) threonine glycosylation is found at Thr-465 and Thr-470. Residue Ser-521 is glycosylated (O-linked (GlcNAc) serine). Polar residues predominate over residues 660–671 (SRVADASNSSAQ). Residues 660–700 (SRVADASNSSAQEGKEEPQGYTDSSSSSTESSQSSQDSQPV) form a disordered region. Over residues 681 to 698 (TDSSSSSTESSQSSQDSQ) the composition is skewed to low complexity. 2 positions are modified to phosphoserine: Ser-782 and Ser-785. Residue Thr-1069 is glycosylated (O-linked (GlcNAc) threonine). Ser-1085 carries the post-translational modification Phosphoserine. The tract at residues 1232–1264 (QLDDDETAMEQDIDSSTEDGTEPSPSQSAVERS) is disordered. Residues 1233–1252 (LDDDETAMEQDIDSSTEDGT) show a composition bias toward acidic residues. Positions 1254 to 1264 (PSPSQSAVERS) are enriched in polar residues.

In terms of assembly, homodimer. Interacts with the transactivation domain of BRCA2. Interacts with CBX1 (via chromoshadow domain). Interacts with ZMYND11. Does not interact with CBX3 or CBX5. Component of a nuclear receptor-mediated transcription complex composed of at least ZNF335, CCAR2 and EMSY; the complex stimulates the transcription of nuclear receptor target genes such as SOX9 and HOXA1. Within the complex interacts with CCAR2 and ZNF335. Components of this complex may associate with components of a histone methylation complex to form a complex at least composed of ZNF335, HCFC1, CCAR2, EMSY, MKI67, RBBP5, ASH2L and WDR5. Within this complex, interacts with ASH2L and RBBP5.

It is found in the nucleus. Its function is as follows. Regulator which is able to repress transcription, possibly via its interaction with a multiprotein chromatin remodeling complex that modifies the chromatin. Its interaction with BRCA2 suggests that it may play a central role in the DNA repair function of BRCA2. Mediates ligand-dependent transcriptional activation by nuclear hormone receptors. The polypeptide is BRCA2-interacting transcriptional repressor EMSY (Mus musculus (Mouse)).